Here is a 1563-residue protein sequence, read N- to C-terminus: Ribulose bisphosphate carboxylase (1563 aa).

2 residues coordinate substrate: His-32 and Ser-79. Residues 197-217 (LAAAFVGASTTRKASSVARRA) constitute a propeptide, linker. Asn-328 provides a ligand contact to substrate. Residue Lys-383 is the Proton acceptor of the active site. Residue Lys-385 coordinates substrate. Lys-408, Asp-410, and Glu-411 together coordinate Mg(2+). An N6-carboxylysine modification is found at Lys-408. The active-site Proton acceptor is His-504. 3 residues coordinate substrate: Arg-505, His-538, and Ser-585. A propeptide spans 703 to 723 (LAAAFVGASTTRKASSVARRA) (linker). Residue Asn-834 coordinates substrate. The Proton acceptor role is filled by Lys-889. Lys-891 contacts substrate. Lys-914, Asp-916, and Glu-917 together coordinate Mg(2+). The residue at position 914 (Lys-914) is an N6-carboxylysine. His-1010 (proton acceptor) is an active-site residue. Residues Arg-1011, His-1044, and Ser-1091 each coordinate substrate. Residues 1209 to 1229 (LAAAFVGASTTRKASSVARRA) constitute a propeptide, linker. Asn-1340 is a substrate binding site. Lys-1395 serves as the catalytic Proton acceptor. Lys-1397 contacts substrate. Residues Lys-1420, Asp-1422, and Glu-1423 each contribute to the Mg(2+) site. Lys-1420 is modified (N6-carboxylysine). His-1516 (proton acceptor) is an active-site residue. Substrate contacts are provided by Arg-1517 and His-1550.

Belongs to the RuBisCO large chain family. Type II subfamily. In terms of assembly, homodimer. Requires Mg(2+) as cofactor. In Western blots an approximately 220 kDa polyprotein and 2 smaller proteins of about 55 and 52 kDa are detected, suggesting the polyprotein may be cleaved at one end of the linker and then at the other end to give mature RuBisCO.

Its subcellular location is the plastid. It localises to the chloroplast. It catalyses the reaction 2 (2R)-3-phosphoglycerate + 2 H(+) = D-ribulose 1,5-bisphosphate + CO2 + H2O. It carries out the reaction D-ribulose 1,5-bisphosphate + O2 = 2-phosphoglycolate + (2R)-3-phosphoglycerate + 2 H(+). Functionally, ruBisCO catalyzes two reactions: the carboxylation of D-ribulose 1,5-bisphosphate, the primary event in carbon dioxide fixation, as well as the oxidative fragmentation of the pentose substrate. Both reactions occur simultaneously and in competition at the same active site. The sequence is that of Ribulose bisphosphate carboxylase (rbcL) from Prorocentrum minimum (Dinoflagellate).